A 394-amino-acid chain; its full sequence is Anthocyanidin 3-O-glucosyltransferase 6 (394 aa).

Asp-37 acts as the Charge relay in catalysis. Thr-59, Ala-267, Gln-269, His-284, Trp-287, Asn-288, Ser-289, and Glu-292 together coordinate UDP-alpha-D-glucose. Ala-307 is a binding site for an anthocyanidin. The UDP-alpha-D-glucose site is built by Glu-308 and Gln-309.

It belongs to the UDP-glycosyltransferase family. As to expression, expressed in cotyledons and leaves.

It carries out the reaction an anthocyanidin + UDP-alpha-D-glucose + H(+) = an anthocyanidin 3-O-beta-D-glucoside + UDP. Its pathway is pigment biosynthesis; anthocyanin biosynthesis. In the presence of other necessary color factors, this glycosylation reaction allows the accumulation of anthocyanin pigments. May be involved in glycosylation of unstable cyanohydrins to produce stable cyanoglucosides. This Manihot esculenta (Cassava) protein is Anthocyanidin 3-O-glucosyltransferase 6 (GT6).